Consider the following 352-residue polypeptide: MQSRAYALISEAALHHNLSGLSARAGTRLLLPVKANAYGHGLELIARQAAAHPDVWGLAVATPREAQAVALLNLGRPVVLLTPPTPDEVVPLADLGVRLPVSSLEEAEALPVHARAHLKVDTGMNRLGARPDEAIRIGQRLAERGVLEGAYTHFATTDEEDLSFAHEQLRRFRSVIAALPPVLAHCANGGGILSLGHLGDMGLSRPGLASYGFAPAHLQRVVPLTPVMTLRATVTQVHKAFAGESVSYGGLWQAPRDTTLATIGFGYADGYPRNATLRAHVLVRGERRPVVGRICMDQCMVDVTGLEVRAGDQVECWGSGDLTVSEVAGWGDTIEYEVLTGLGERVERVAVP.

K34 (proton acceptor; specific for D-alanine) is an active-site residue. K34 is subject to N6-(pyridoxal phosphate)lysine. R126 lines the substrate pocket. Y248 acts as the Proton acceptor; specific for L-alanine in catalysis. Residue M296 participates in substrate binding.

Belongs to the alanine racemase family. It depends on pyridoxal 5'-phosphate as a cofactor.

It carries out the reaction L-alanine = D-alanine. The protein operates within amino-acid biosynthesis; D-alanine biosynthesis; D-alanine from L-alanine: step 1/1. In terms of biological role, catalyzes the interconversion of L-alanine and D-alanine. May also act on other amino acids. The polypeptide is Alanine racemase (alr) (Deinococcus deserti (strain DSM 17065 / CIP 109153 / LMG 22923 / VCD115)).